A 1021-amino-acid chain; its full sequence is Caspase recruitment domain-containing protein 10 (1021 aa).

The interval methionine 1–glutamate 24 is disordered. Phosphoserine is present on serine 18. Residues glutamate 23–glutamate 115 form the CARD domain. The stretch at threonine 138–glycine 450 forms a coiled coil. Disordered regions lie at residues glutamate 475 to isoleucine 544, serine 597 to glycine 616, and leucine 790 to alanine 809. 2 stretches are compositionally biased toward basic and acidic residues: residues histidine 495–asparagine 508 and arginine 525–lysine 535.

As to quaternary structure, CARD10 and BCL10 bind to each other by CARD-CARD interaction. They both participate in a complex with MALT1, where MALT1 binds to BCL10. Interacts with TMEM43; this interaction is essential for EGFR-mediated NF-kappa-B activation. Highly expressed in kidney, heart followed by brain, lung, liver, skeletal muscle and testis.

Its function is as follows. Scaffold protein that plays an important role in mediating the activation of NF-kappa-B via BCL10 or EGFR. The polypeptide is Caspase recruitment domain-containing protein 10 (Card10) (Mus musculus (Mouse)).